Here is a 476-residue protein sequence, read N- to C-terminus: MTSISIDQPIHVIGGGLAGSEAAWQIAQAGIRVVLHEMRPIRMTEAHRSDSLAELVCSNSFRSDDAANNAVGLLHAEMRRLNSLVMRAADANQVPAGGALAVDRDGFAAAVTRALAEHPLIEIRRGEVDGLPPADWSNVVISTGPLTSAPLAAAIQALTGEDSLSFFDAIAPIVHRDSIDMTKAWFQSRYDKVGPGGTGADYLNCPMTREQYDGFVAALVAGDKVDFKDWEKDTPYFDGCLPIEVMAERGPETLRYGPMKPVGLTNPHNPTVKPYGIVQLRQDNKLGTLYNMVGFQTKLKHGEQARIFRTIPGLENADFARLGGLHRNTFLNSPKLLDSQLRLRAEPRLRFAGQMTGCEGYVESAGIGLIAGLCAAADAVGRALTPPPPTTALGALLGHITGGHIETIDAGPRSFQPMNINFGLFPPLTEPPTHGADGKKLRGPEKSVAKKQALSARALADLDRWIADAVRVAAAA.

Position 14-19 (14-19) interacts with FAD; the sequence is GGGLAG. The interval 428 to 447 is disordered; the sequence is LTEPPTHGADGKKLRGPEKS. The segment covering 436 to 447 has biased composition (basic and acidic residues); that stretch reads ADGKKLRGPEKS.

Belongs to the MnmG family. TrmFO subfamily. It depends on FAD as a cofactor.

The protein resides in the cytoplasm. It carries out the reaction uridine(54) in tRNA + (6R)-5,10-methylene-5,6,7,8-tetrahydrofolate + NADH + H(+) = 5-methyluridine(54) in tRNA + (6S)-5,6,7,8-tetrahydrofolate + NAD(+). The catalysed reaction is uridine(54) in tRNA + (6R)-5,10-methylene-5,6,7,8-tetrahydrofolate + NADPH + H(+) = 5-methyluridine(54) in tRNA + (6S)-5,6,7,8-tetrahydrofolate + NADP(+). Its function is as follows. Catalyzes the folate-dependent formation of 5-methyl-uridine at position 54 (M-5-U54) in all tRNAs. The protein is Methylenetetrahydrofolate--tRNA-(uracil-5-)-methyltransferase TrmFO of Rhodopseudomonas palustris (strain BisA53).